A 1068-amino-acid polypeptide reads, in one-letter code: Protein AF-10 (1068 aa).

The segment at 22-74 adopts a PHD-type 1 zinc-finger fold; the sequence is IGGCCVCSDERGWAENPLVYCDGHGCSVAVHQACYGIVQVPTGPWFCRKCESQ. The C2HC pre-PHD-type zinc finger occupies 79–112; that stretch reads RVRCELCPHKDGALKRTDNGGWAHVVCALYIPEV. The segment at 80 to 287 is self-association; the sequence is VRCELCPHKD…SLKRLEDTTA (208 aa). The required for interaction with histone H3 stretch occupies residues 106 to 190; that stretch reads ALYIPEVQFA…EGNGADNVQY (85 aa). The segment at 135-198 adopts a PHD-type 2 zinc-finger fold; that stretch reads KTCYICDEQG…QYCGYCKYHF (64 aa). Residues 141–233 form an interaction with FSTL3 region; that stretch reads DEQGRESKAA…QDKHHEKEKK (93 aa). The interval 206–260 is disordered; it reads RGSNRSYDQSLSDSSSHSQDKHHEKEKKKYKEKDKHKQKHKKQPEPSPALVPSLT. Positions 211-222 are enriched in low complexity; that stretch reads SYDQSLSDSSSH. Ser217 bears the Phosphoserine mark. The segment covering 223–240 has biased composition (basic and acidic residues); that stretch reads SQDKHHEKEKKKYKEKDK. A Phosphoserine modification is found at Ser252. Lys280 participates in a covalent cross-link: Glycyl lysine isopeptide (Lys-Gly) (interchain with G-Cter in SUMO2). The span at 291 to 305 shows a compositional bias: polar residues; sequence NANFQEVSAHTSSGK. A disordered region spans residues 291–505; that stretch reads NANFQEVSAH…SSASPTSSVA (215 aa). Positions 306 to 317 are enriched in basic and acidic residues; that stretch reads DVSETRGSEGKG. A DNA-binding region spans residues 311-674; sequence RGSEGKGKKS…QDLGDNSRNL (364 aa). Residues 352-372 show a composition bias toward low complexity; the sequence is SFSGTPGSVKSSSGSSVQSPQ. 2 stretches are compositionally biased toward polar residues: residues 387–396 and 404–446; these read YSHSQQSSAT and SGSQ…SSLP. The residue at position 436 (Ser436) is a Phosphoserine. A compositionally biased stretch (basic residues) spans 465–483; that stretch reads EKKRKGNKQSKHGPGRPKG. The segment covering 490 to 505 has biased composition (low complexity); sequence VSHLSVSSASPTSSVA. A Phosphoserine modification is found at Ser532. Over residues 583–594 the composition is skewed to low complexity; it reads SGSGSSTPVSSS. 2 disordered regions span residues 583 to 612 and 660 to 708; these read SGSG…ALSP and NNQT…SLEN. Composition is skewed to polar residues over residues 595–604 and 660–673; these read HLPQQSSGHL and NNQT…NSRN. Residues 674–694 show a composition bias toward low complexity; it reads LVGRGSSPRGSLSPRSPVSSL. A phosphoserine mark is found at Ser684, Ser686, and Ser689. The segment at 703 to 784 is transactivation domain; required for DOT1L-binding; the sequence is NSSLENLPPV…NAQLSVPFPT (82 aa). Residues 750–778 form a leucine-zipper region; the sequence is LQVENRRLEEQIKNLTAKKERLQLLNAQL. The span at 800-814 shows a compositional bias: polar residues; sequence AQTAPTTDSLNSSKS. Positions 800-865 are disordered; that stretch reads AQTAPTTDSL…SPAQQGSGVS (66 aa). Composition is skewed to low complexity over residues 834–848 and 855–865; these read LTSS…SALS and QSPAQQGSGVS.

Self-associates. Interacts with FSTL3 isoform 2; the interaction enhances MLLT10 in vitro transcriptional activity and self-association. Interacts with YEATS4. Interacts with SS18. Interacts with DOT1L; this interaction also occurs with the KMT2A/MLL1 fusion protein. Interacts with histone H3; interaction is necessary for MLLT10 binding to nucleosomes; interaction is inhibited by histone H3 'Lys-27' methylations (H3K27me1, H3K27me2 and H3K27me3) amd acetylation; interaction stabilizes association of MLLT10 at chromatin; interaction is essential for histone H3 'Lys-79' dimethylation (H3K79me2). Expressed abundantly in testis.

Its subcellular location is the nucleus. Probably involved in transcriptional regulation. In vitro or as fusion protein with KMT2A/MLL1 has transactivation activity. Binds to cruciform DNA. In cells, binding to unmodified histone H3 regulates DOT1L functions including histone H3 'Lys-79' dimethylation (H3K79me2) and gene activation. In Homo sapiens (Human), this protein is Protein AF-10.